Consider the following 59-residue polypeptide: Cuticle protein 7 isoform b (59 aa).

Pyrrolidone carboxylic acid is present on glutamine 1.

This Limulus polyphemus (Atlantic horseshoe crab) protein is Cuticle protein 7 isoform b.